The primary structure comprises 77 residues: Translation initiation factor IF-1, chloroplastic (77 aa).

In terms of domain architecture, S1-like spans 1–71 (MKEQKWIHEG…TRGRIIYRLR (71 aa)).

The protein belongs to the IF-1 family. Component of the 30S ribosomal translation pre-initiation complex which assembles on the 30S ribosome in the order IF-2 and IF-3, IF-1 and N-formylmethionyl-tRNA(fMet); mRNA recruitment can occur at any time during PIC assembly.

The protein resides in the plastid. The protein localises to the chloroplast. In terms of biological role, one of the essential components for the initiation of protein synthesis. Stabilizes the binding of IF-2 and IF-3 on the 30S subunit to which N-formylmethionyl-tRNA(fMet) subsequently binds. Helps modulate mRNA selection, yielding the 30S pre-initiation complex (PIC). Upon addition of the 50S ribosomal subunit IF-1, IF-2 and IF-3 are released leaving the mature 70S translation initiation complex. The protein is Translation initiation factor IF-1, chloroplastic of Nandina domestica (Heavenly bamboo).